A 163-amino-acid chain; its full sequence is Glutathione peroxidase 2 (163 aa).

Cysteine 36 is a catalytic residue.

It belongs to the glutathione peroxidase family.

The protein resides in the cytoplasm. It carries out the reaction 2 glutathione + H2O2 = glutathione disulfide + 2 H2O. Functionally, may constitute a glutathione peroxidase-like protective system against oxidative stresses. This is Glutathione peroxidase 2 (gpx-2) from Caenorhabditis elegans.